The sequence spans 119 residues: MARIAGVNLPSNKHVNIALTAIYGIGNSTARKICTDLDIPPFIKLKELTDGKLEELRNSIAKLLVEGDLRREVSMNIKRLIDLGSYRGLRHRRGLPVRGQRTKTNARTRKGPRKAIRAR.

The disordered stretch occupies residues Arg-92–Arg-119.

The protein belongs to the universal ribosomal protein uS13 family. As to quaternary structure, part of the 30S ribosomal subunit. Forms a loose heterodimer with protein S19. Forms two bridges to the 50S subunit in the 70S ribosome.

Located at the top of the head of the 30S subunit, it contacts several helices of the 16S rRNA. In the 70S ribosome it contacts the 23S rRNA (bridge B1a) and protein L5 of the 50S subunit (bridge B1b), connecting the 2 subunits; these bridges are implicated in subunit movement. Contacts the tRNAs in the A and P-sites. In Nitrosomonas eutropha (strain DSM 101675 / C91 / Nm57), this protein is Small ribosomal subunit protein uS13.